The following is a 187-amino-acid chain: Ribosome-recycling factor (187 aa).

It belongs to the RRF family.

The protein localises to the cytoplasm. Its function is as follows. Responsible for the release of ribosomes from messenger RNA at the termination of protein biosynthesis. May increase the efficiency of translation by recycling ribosomes from one round of translation to another. This chain is Ribosome-recycling factor, found in Methylorubrum extorquens (strain CM4 / NCIMB 13688) (Methylobacterium extorquens).